A 157-amino-acid chain; its full sequence is Protein E6 (157 aa).

Zinc fingers lie at residues 41–77 (CNFC…CRVC) and 114–150 (CQTC…CRQC).

Belongs to the papillomaviridae E6 protein family. As to quaternary structure, forms homodimers. Interacts with ubiquitin-protein ligase UBE3A/E6-AP; this interaction stimulates UBE3A ubiquitin activity. Interacts with host BAK1.

It localises to the host cytoplasm. Its subcellular location is the host nucleus. Plays a major role in the induction and maintenance of cellular transformation. E6 associates with host UBE3A/E6-AP ubiquitin-protein ligase and modulates its activity. Protects host keratinocytes from apoptosis by mediating the degradation of host BAK1. May also inhibit host immune response. The chain is Protein E6 from Human papillomavirus type 5b.